Here is a 2776-residue protein sequence, read N- to C-terminus: Microtubule-associated protein 1A (2776 aa).

Phosphoserine is present on residues serine 114, serine 117, serine 118, serine 121, and serine 155. The residue at position 177 (tyrosine 177) is a Phosphotyrosine. A disordered region spans residues 310 to 331 (PSKIKHRADSKESLKAAPKTAM). Phosphoserine occurs at positions 319 and 322. The stretch at 336-338 (KRE) is repeat 1. The segment at 336–541 (KREEVLEEGA…TQDFEELKRE (206 aa)) is 11 X 3 AA approximate repeats of K-K-[DE]. Over residues 345–390 (AKEARSELAKELAKSEKKAKEPSEKPPEKPSKPERVRTESSEALKA) the composition is skewed to basic and acidic residues. Disordered stretches follow at residues 345–678 (AKEA…KAES), 738–809 (TIPG…TELT), 846–1076 (EDQS…AGGQ), 1094–1210 (ETGE…ESLG), 1223–1651 (EKGP…SPEQ), 1685–1729 (DGQG…FKDF), 1744–1848 (LAES…APFS), and 1866–2648 (AELE…NGLK). Serine 384 is modified (phosphoserine). The segment covering 391–406 (EKRKLIKDKVGKKHLK) has biased composition (basic residues). Composition is skewed to basic and acidic residues over residues 407–464 (EKIS…KPDL) and 484–500 (LKVD…ELSS). 9 consecutive repeat copies span residues 415–417 (KRD), 420–422 (KKE), 424–426 (KKE), 427–429 (RKE), 431–433 (KKE), 436–438 (RKE), 440–442 (KKD), 444–446 (KKD), and 449–451 (RKD). At threonine 504 the chain carries Phosphothreonine. A phosphoserine mark is found at serine 526 and serine 527. The span at 536–556 (EELKREERGLLAEPRDTELGE) shows a compositional bias: basic and acidic residues. Copy 11 of the repeat occupies 539 to 541 (KRE). The segment covering 567–579 (GRPSTAIQVTQPP) has biased composition (polar residues). Basic and acidic residues predominate over residues 587–631 (QVEREKEVVPDFPEDKGSKNRAPDSGAEVEREKETWEERKPREAE). 2 positions are modified to phosphoserine: serine 604 and serine 611. Threonine 633 is modified (phosphothreonine). Residues 640–667 (AREESEPEVKEDVIEKAELEEMEEVHPS) show a composition bias toward basic and acidic residues. A phosphoserine mark is found at serine 644, serine 667, serine 678, and serine 786. Composition is skewed to polar residues over residues 785–800 (ASQS…SSKT), 846–859 (EDQS…PQTE), and 870–882 (TVTS…TEAT). Residues serine 873, serine 876, serine 877, and serine 890 each carry the phosphoserine modification. Position 893 is a phosphothreonine (threonine 893). Phosphoserine is present on residues serine 895, serine 899, and serine 908. Residues 944 to 954 (VTTSEKLSSQY) are compositionally biased toward polar residues. A phosphoserine mark is found at serine 981, serine 991, serine 999, serine 1008, serine 1014, serine 1023, and serine 1062. The residue at position 1068 (threonine 1068) is a Phosphothreonine. Over residues 1096 to 1105 (GEAGAASGAG) the composition is skewed to low complexity. Residues 1112–1124 (RTQEPAEPQKDEL) are compositionally biased toward basic and acidic residues. Residues serine 1131, serine 1133, serine 1147, serine 1159, serine 1177, serine 1187, serine 1190, serine 1196, serine 1205, and serine 1208 each carry the phosphoserine modification. Positions 1179-1189 (EDTQSLSFSEE) are enriched in polar residues. A compositionally biased stretch (polar residues) spans 1197–1210 (LDISSKQLSPESLG). A compositionally biased stretch (basic and acidic residues) spans 1223–1234 (EKGPLVKAEDNS). Serine 1251, serine 1289, serine 1310, serine 1313, and serine 1316 each carry phosphoserine. The segment covering 1302-1317 (TSDSSLTKSPESLSSP) has biased composition (low complexity). 6 stretches are compositionally biased toward basic and acidic residues: residues 1332 to 1350 (GSED…RKSE), 1370 to 1384 (SVMH…EENK), 1391 to 1435 (KTSE…KALE), 1449 to 1488 (PRAR…RAPE), 1499 to 1541 (RAPE…DQDN), and 1549 to 1599 (GTLK…EKTR). 3 positions are modified to phosphoserine: serine 1516, serine 1580, and serine 1606. The span at 1609-1625 (EEGKAREQEEKYWKEQD) shows a compositional bias: basic and acidic residues. Serine 1634 and serine 1648 each carry phosphoserine. Positions 1709-1718 (QEITPLQHTP) are enriched in polar residues. 5 positions are modified to phosphoserine: serine 1720, serine 1747, serine 1762, serine 1768, and serine 1772. Threonine 1777 bears the Phosphothreonine mark. A phosphoserine mark is found at serine 1783 and serine 1789. Residues 1794-1808 (TKSTPPTRNEPTTPS) show a composition bias toward polar residues. The span at 1823–1844 (LPPAPLSPAPAPPTPAPDPHAP) shows a compositional bias: pro residues. Residues 1878–1890 (KDYRKAEGEREGE) show a composition bias toward basic and acidic residues. Position 1902 is a phosphoserine (serine 1902). Basic and acidic residues-rich tracts occupy residues 1907-1935 (EVTE…DERS) and 1972-1988 (STKE…EKEL). Threonine 1928 is modified (phosphothreonine). Positions 1990-2006 (SAVSPPNLHSDTPTFSY) are enriched in polar residues. Phosphoserine is present on serine 1993. Pro residues predominate over residues 2013–2039 (TIPPRQEPEPGPNVEPSFTPPAVPPRA). Residue threonine 2031 is modified to Phosphothreonine. Residues 2042–2058 (SLSQDPSPPLNGSTTSC) are compositionally biased toward polar residues. Phosphoserine is present on residues serine 2048 and serine 2082. Basic and acidic residues predominate over residues 2060-2096 (PDRRTPSPKEAGRSHWDDGTNDSDLEKGAREQPEKET). Pro residues predominate over residues 2149–2158 (PAPPQLPSPA). A phosphoserine mark is found at serine 2209, serine 2226, serine 2230, serine 2233, and serine 2234. A compositionally biased stretch (polar residues) spans 2231–2242 (EGSSSEATTPVI). Over residues 2279–2292 (PLSPAPLASRDLAP) the composition is skewed to low complexity. The span at 2355–2367 (AEKEEAEALHAWE) shows a compositional bias: basic and acidic residues. A Phosphoserine modification is found at serine 2425. A compositionally biased stretch (low complexity) spans 2478 to 2490 (SASDSGSSQSDSD). Pro residues predominate over residues 2535–2551 (DPPPAPLPDPRPPPPRP). Positions 2566-2576 (GRVERLREKVQ) are enriched in basic and acidic residues. Phosphoserine occurs at positions 2623 and 2637.

The protein belongs to the MAP1 family. 3 different light chains, LC1 (a cleavage product of MAP1B), LC2 (a cleavage product of MAP1A) and LC3 (produced by one of the MAP1LC3 genes), can associate with the MAP1A or MAP1B heavy chains. Interacts with guanylate kinase-like domain of DLG1, DLG2 and DLG4. Binds to CSNK1D. Interacts with TIAM2. As to quaternary structure, interacts with ELAVL4. In terms of processing, phosphorylated by CSNK1D. LC2 is generated from MAP1A by proteolytic processing. It is free to associate with both MAP1A and MAP1B. As to expression, both isoforms highly expressed in brain, and to a lesser extent in embryo. Isoform 1 is also expressed at a low level in other tissues including heart and muscle.

The protein localises to the cytoplasm. The protein resides in the cytoskeleton. Functionally, structural protein involved in the filamentous cross-bridging between microtubules and other skeletal elements. The sequence is that of Microtubule-associated protein 1A (Map1a) from Mus musculus (Mouse).